The primary structure comprises 188 residues: SAYSvFN domain-containing protein 1 (188 aa).

Residues 1–10 (MEQRLAEFRE) are compositionally biased toward basic and acidic residues. 2 disordered regions span residues 1–43 (MEQR…ATPK) and 60–80 (AIAQ…PEST). Residues 1–100 (MEQRLAEFRE…SFLTNITFLK (100 aa)) lie on the Cytoplasmic side of the membrane. 2 stretches are compositionally biased toward low complexity: residues 22-43 (STSS…ATPK) and 60-75 (AIAQ…AGQQ). The interval 86–100 (SSCRQSFLTNITFLK) is middle helical (MH). An intramembrane region (helical) is located at residues 101–121 (VLLWLVLLGLFVELEFGLAYF). Residues 122–188 (VLSMFYWMYV…RTSPSCSSYP (67 aa)) lie on the Cytoplasmic side of the membrane.

It belongs to the SAYSD1 family. In terms of assembly, associates (via N-terminus) with ribosomes. In terms of tissue distribution, enriched in testis; predominantly expressed in round and elongating spermatids.

Its subcellular location is the endoplasmic reticulum membrane. The protein resides in the cytoplasmic vesicle membrane. Its function is as follows. Ufmylation 'reader' component of a translocation-associated quality control pathway, a mechanism that takes place when a ribosome has stalled during translation, and which is required to degrade clogged substrates. Specifically recognizes and binds ufmylated ribosomes when a ribosome has stalled, promoting the transport of stalled nascent chain via the TRAPP complex to lysosomes for degradation. The chain is SAYSvFN domain-containing protein 1 from Mus musculus (Mouse).